The chain runs to 301 residues: Probable enoyl-CoA hydratase 2, mitochondrial (301 aa).

The transit peptide at methionine 1–threonine 32 directs the protein to the mitochondrion. Substrate contacts are provided by residues alanine 105–leucine 109 and glycine 152.

The protein belongs to the enoyl-CoA hydratase/isomerase family.

The protein resides in the mitochondrion. The catalysed reaction is a (3S)-3-hydroxyacyl-CoA = a (2E)-enoyl-CoA + H2O. The enzyme catalyses a 4-saturated-(3S)-3-hydroxyacyl-CoA = a (3E)-enoyl-CoA + H2O. The protein operates within lipid metabolism; fatty acid beta-oxidation. Its function is as follows. Straight-chain enoyl-CoA thioesters from C4 up to at least C16 are processed, although with decreasing catalytic rate. In Arabidopsis thaliana (Mouse-ear cress), this protein is Probable enoyl-CoA hydratase 2, mitochondrial.